The following is a 145-amino-acid chain: Aminoglycoside N(6')-acetyltransferase type 1 (145 aa).

The region spanning 1–145 (MDIRQMNKTH…ERVIFYRKRC (145 aa)) is the N-acetyltransferase domain. Substrate-binding residues include tryptophan 22, histidine 25, tyrosine 66, and glutamate 79. Residues 81–83 (IFV) and 89–94 (QRGVAK) each bind acetyl-CoA. Aspartate 115 contacts substrate. Residue asparagine 120 participates in acetyl-CoA binding. A substrate-binding site is contributed by glutamate 136.

In terms of assembly, homodimer.

It carries out the reaction kanamycin B + acetyl-CoA = N(6')-acetylkanamycin B + CoA + H(+). Functionally, catalyzes the transfer of an acetyl group from acetyl-CoA to the 6'-amino group of aminoglycoside molecules conferring resistance to antibiotics containing the purpurosamine ring including amikacin, tobramycin, dibekacin and ribostamycin. Able to acetylate eukaryotic histone proteins. The polypeptide is Aminoglycoside N(6')-acetyltransferase type 1 (Salmonella enteritidis).